A 115-amino-acid polypeptide reads, in one-letter code: Large ribosomal subunit protein bL20c (115 aa).

This sequence belongs to the bacterial ribosomal protein bL20 family.

It is found in the plastid. The protein localises to the chloroplast. Functionally, binds directly to 23S ribosomal RNA and is necessary for the in vitro assembly process of the 50S ribosomal subunit. It is not involved in the protein synthesizing functions of that subunit. The sequence is that of Large ribosomal subunit protein bL20c from Physcomitrium patens (Spreading-leaved earth moss).